The sequence spans 372 residues: Ca(2+)/H(+) antiporter (372 aa).

The next 11 membrane-spanning stretches (helical) occupy residues Ile7–Gly27, Thr29–Ala49, Gly62–Leu82, Leu94–Gly114, Met134–Val154, Leu162–Met182, Leu222–Val242, Ser251–Ala271, Gly294–Ile314, Leu320–Ile340, and Ile352–Val372.

Belongs to the Ca(2+):cation antiporter (CaCA) (TC 2.A.19) family. Cation/proton exchanger (CAX) subfamily.

It localises to the cell inner membrane. In terms of biological role, ca(+)/H(+) antiporter that extrudes calcium in exchange for external protons. Plays an important role in salt tolerance. Does not transport sodium or lithium. This chain is Ca(2+)/H(+) antiporter, found in Synechocystis sp. (strain ATCC 27184 / PCC 6803 / Kazusa).